The chain runs to 430 residues: L-lysine N6-monooxygenase MbtG (430 aa).

An N-terminal signal peptide occupies residues 1-21 (MTATLAVIGAGPKAVAVAAKA).

This sequence belongs to the lysine N(6)-hydroxylase/L-ornithine N(5)-oxygenase family. FAD is required as a cofactor.

It catalyses the reaction L-lysine + NADPH + O2 = N(6)-hydroxy-L-lysine + NADP(+) + H2O. It participates in siderophore biosynthesis; mycobactin biosynthesis. In terms of biological role, flavoprotein monooxygenase required for N-hydroxylation of the two acylated lysine residues during mycobactin assembly, thus producing the hydroxamate groups necessary for iron sequestration. Is also able, but less efficiently, to hydroxylate L-lysine (non acylated) in vitro. This is L-lysine N6-monooxygenase MbtG (mbtG) from Mycobacterium sp. (strain MCS).